Reading from the N-terminus, the 602-residue chain is Elongation factor 4 (602 aa).

A tr-type G domain is found at 7–189 (RNIRNFSIIA…AIVHRIPPPK (183 aa)). GTP-binding positions include 19 to 24 (DHGKST) and 136 to 139 (NKID).

Belongs to the TRAFAC class translation factor GTPase superfamily. Classic translation factor GTPase family. LepA subfamily.

It is found in the cell inner membrane. The enzyme catalyses GTP + H2O = GDP + phosphate + H(+). Required for accurate and efficient protein synthesis under certain stress conditions. May act as a fidelity factor of the translation reaction, by catalyzing a one-codon backward translocation of tRNAs on improperly translocated ribosomes. Back-translocation proceeds from a post-translocation (POST) complex to a pre-translocation (PRE) complex, thus giving elongation factor G a second chance to translocate the tRNAs correctly. Binds to ribosomes in a GTP-dependent manner. The protein is Elongation factor 4 of Stenotrophomonas maltophilia (strain R551-3).